A 601-amino-acid chain; its full sequence is ATP-dependent lipid A-core flippase (601 aa).

5 helical membrane passes run 33-53 (CVAVVAMIAYAAITPFFAKLI), 72-92 (VSLMLIGLSVLRGIAGFLSEY), 158-178 (VIGLMALMVYQNPVLSLVFLV), 255-275 (LGGGVIHLISVAGVAGILYVV), and 283-303 (TITPGSLMAFIAAMAMMLSPI). Positions 34 to 315 (VAVVAMIAYA…LSQVVSVMQR (282 aa)) constitute an ABC transmembrane type-1 domain. The ABC transporter domain occupies 347–583 (IEYRHVSLVY…RGGYADLYAM (237 aa)). 381–388 (GQSGSGKT) serves as a coordination point for ATP.

The protein belongs to the ABC transporter superfamily. Lipid exporter (TC 3.A.1.106) family. In terms of assembly, homodimer.

The protein localises to the cell inner membrane. The enzyme catalyses ATP + H2O + lipid A-core oligosaccharideSide 1 = ADP + phosphate + lipid A-core oligosaccharideSide 2.. Functionally, involved in lipopolysaccharide (LPS) biosynthesis. Translocates lipid A-core from the inner to the outer leaflet of the inner membrane. Transmembrane domains (TMD) form a pore in the inner membrane and the ATP-binding domain (NBD) is responsible for energy generation. The protein is ATP-dependent lipid A-core flippase of Methylococcus capsulatus (strain ATCC 33009 / NCIMB 11132 / Bath).